The primary structure comprises 367 residues: MATILTLAGDGIGPEIMTQAIDVLNAVNDKFALGLTLESGLIGGVAVDSTGEPLPEETLQRARAADAVLLGAVGGPKWDGIERSKRPERGLLKIRSELGLFANLRVAKLYPQLVNASSIKPEIISGLDLLIVRELTGGIYFGEPRGIRTLENGEQQGYNTMVYSTSEINRIGKVAFELAQTRAQAAGTAAKVCSIDKANVLEVTELWKQTMIELQQSEYSDVALSHMYADNACMQLIKDPKQFDVMVTGNLFGDILSDEAAMLTGSIGMLPSASLDEAGKGMYEPCHGSAPDIAGQDIANPLATILSVSMMLRYTFKQEAAAQAIEQAVSDVLDDGLRTVDILDRNEAGLIQVGCQQMGQAVLAKLI.

75–88 lines the NAD(+) pocket; it reads GPKWDGIERSKRPE. Substrate-binding residues include R95, R105, R133, and D230. Mg(2+) is bound by residues D230, D254, and D258. 288 to 300 provides a ligand contact to NAD(+); the sequence is GSAPDIAGQDIAN.

This sequence belongs to the isocitrate and isopropylmalate dehydrogenases family. LeuB type 1 subfamily. In terms of assembly, homodimer. Requires Mg(2+) as cofactor. It depends on Mn(2+) as a cofactor.

It localises to the cytoplasm. It carries out the reaction (2R,3S)-3-isopropylmalate + NAD(+) = 4-methyl-2-oxopentanoate + CO2 + NADH. The protein operates within amino-acid biosynthesis; L-leucine biosynthesis; L-leucine from 3-methyl-2-oxobutanoate: step 3/4. Catalyzes the oxidation of 3-carboxy-2-hydroxy-4-methylpentanoate (3-isopropylmalate) to 3-carboxy-4-methyl-2-oxopentanoate. The product decarboxylates to 4-methyl-2 oxopentanoate. In Psychrobacter cryohalolentis (strain ATCC BAA-1226 / DSM 17306 / VKM B-2378 / K5), this protein is 3-isopropylmalate dehydrogenase.